The following is a 331-amino-acid chain: Nacrein-like protein P1 (331 aa).

Positions 1–331 constitute an Alpha-carbonic anhydrase domain; the sequence is QSPINIVSYD…LHALRNVEGY (331 aa). Residues His69, His71, and His94 each coordinate Zn(2+). Positions 138–240 are disordered; that stretch reads DEPDDEECKR…GENGHKHGCR (103 aa). Over residues 144-156 the composition is skewed to basic and acidic residues; sequence ECKRILKGHHPDN. The span at 157–232 shows a compositional bias: low complexity; sequence NENGNGDNGN…NNGENGNNGE (76 aa). Tandem repeats lie at residues 162–164, 165–167, 168–170, 171–173, 174–176, 177–179, 180–182, 183–185, 186–188, 189–191, 192–194, 195–197, 198–200, 201–203, 204–206, 207–209, 210–212, 213–215, 216–218, 219–221, 222–224, 225–227, 228–229, and 231–233. The tract at residues 162–233 is 24 X 3 AA approximate tandem repeats of G-X-N; sequence GDNGNNGYNG…NGENGNNGEN (72 aa). 298–299 lines the substrate pocket; that stretch reads TT.

The protein belongs to the alpha-carbonic anhydrase family. As to quaternary structure, homooligomer; disulfide-linked. May also be disulfide-linked to insoluble organic matrix. Requires Zn(2+) as cofactor. In terms of tissue distribution, expressed in the mantle.

It localises to the secreted. It is found in the extracellular space. The protein resides in the extracellular matrix. It carries out the reaction hydrogencarbonate + H(+) = CO2 + H2O. Functionally, acts as a negative regulator for calcification in the shells of mollusks. May function both as a calcium concentrator and as a carbonic anhydrase required for production of carbonate ions, which are assembled to CaCO(3) at mineralization sites. Is important for shell formation in both the calcitic prismatic layer and the aragonitic nacreous layer. Shows inhibitory activity of crystal formation when present in free state but, when attached to the insoluble matrix, may regulate the form and size of aragonite crystal. In Mizuhopecten yessoensis (Japanese scallop), this protein is Nacrein-like protein P1.